Consider the following 561-residue polypeptide: Phosphatidylinositol 4-kinase gamma 1 (561 aa).

A PI3K/PI4K catalytic domain is found at 121 to 416 (GAQPLLLPSG…SVFGKTSEDS (296 aa)). Residues 127-133 (LPSGMGG) form a G-loop region. ATP contacts are provided by residues 128 to 134 (PSGMGGA), Lys149, and 233 to 236 (QRFV). The interval 266 to 274 (LNLDRHAGN) is catalytic loop. The segment at 296 to 322 (PIDHGLCLPECLDDPYFEWLNWPQALV) is activation loop. Asp298 serves as a coordination point for ATP. The tract at residues 456-520 (PPLVPRGPRA…PISPNHDESK (65 aa)) is disordered. The span at 467–484 (TIPNDVTASMSSSQNQRI) shows a compositional bias: polar residues.

Belongs to the PI3/PI4-kinase family. Type II PI4K subfamily.

The catalysed reaction is a 1,2-diacyl-sn-glycero-3-phospho-(1D-myo-inositol) + ATP = a 1,2-diacyl-sn-glycero-3-phospho-(1D-myo-inositol 4-phosphate) + ADP + H(+). The phosphorylation of phosphatidylinositol (PI) to PI4P is the first committed step in the generation of phosphatidylinositol 4,5-bisphosphate (PIP2), a precursor of the second messenger inositol 1,4,5-trisphosphate (InsP3). The chain is Phosphatidylinositol 4-kinase gamma 1 (PI4KG1) from Arabidopsis thaliana (Mouse-ear cress).